The sequence spans 739 residues: Eukaryotic translation initiation factor 3 subunit B (739 aa).

Residues 39-125 (AFVVIDGLPV…HTLAVNKLTD (87 aa)) enclose the RRM domain. 5 WD repeats span residues 191 to 229 (RDHW…KQKQ), 231 to 288 (PHPF…RSFV), 457 to 498 (SLKD…SFFA), 516 to 559 (IEKK…EKPE), and 574 to 612 (NEHF…HTFS).

This sequence belongs to the eIF-3 subunit B family. Component of the eukaryotic translation initiation factor 3 (eIF-3) complex.

The protein localises to the cytoplasm. In terms of biological role, RNA-binding component of the eukaryotic translation initiation factor 3 (eIF-3) complex, which is involved in protein synthesis of a specialized repertoire of mRNAs and, together with other initiation factors, stimulates binding of mRNA and methionyl-tRNAi to the 40S ribosome. The eIF-3 complex specifically targets and initiates translation of a subset of mRNAs involved in cell proliferation. In Coccidioides immitis (strain RS) (Valley fever fungus), this protein is Eukaryotic translation initiation factor 3 subunit B.